The following is a 238-amino-acid chain: 3-dehydroquinate dehydratase (238 aa).

Residues 35 to 37 (ELR) and Arg-68 contribute to the 3-dehydroquinate site. His-131 acts as the Proton donor/acceptor in catalysis. Residue Lys-158 is the Schiff-base intermediate with substrate of the active site. The 3-dehydroquinate site is built by Arg-200 and Gln-223.

This sequence belongs to the type-I 3-dehydroquinase family. As to quaternary structure, homodimer.

It carries out the reaction 3-dehydroquinate = 3-dehydroshikimate + H2O. It functions in the pathway metabolic intermediate biosynthesis; chorismate biosynthesis; chorismate from D-erythrose 4-phosphate and phosphoenolpyruvate: step 3/7. Its function is as follows. Involved in the third step of the chorismate pathway, which leads to the biosynthesis of aromatic amino acids. Catalyzes the cis-dehydration of 3-dehydroquinate (DHQ) and introduces the first double bond of the aromatic ring to yield 3-dehydroshikimate. This chain is 3-dehydroquinate dehydratase, found in Staphylococcus epidermidis (strain ATCC 35984 / DSM 28319 / BCRC 17069 / CCUG 31568 / BM 3577 / RP62A).